A 233-amino-acid polypeptide reads, in one-letter code: Lipoprotein-releasing system ATP-binding protein LolD (233 aa).

The region spanning Y10–P233 is the ABC transporter domain. G46–S53 is a binding site for ATP.

The protein belongs to the ABC transporter superfamily. Lipoprotein translocase (TC 3.A.1.125) family. The complex is composed of two ATP-binding proteins (LolD) and two transmembrane proteins (LolC and LolE).

Its subcellular location is the cell inner membrane. Functionally, part of the ABC transporter complex LolCDE involved in the translocation of mature outer membrane-directed lipoproteins, from the inner membrane to the periplasmic chaperone, LolA. Responsible for the formation of the LolA-lipoprotein complex in an ATP-dependent manner. This Nitratidesulfovibrio vulgaris (strain ATCC 29579 / DSM 644 / CCUG 34227 / NCIMB 8303 / VKM B-1760 / Hildenborough) (Desulfovibrio vulgaris) protein is Lipoprotein-releasing system ATP-binding protein LolD.